The primary structure comprises 232 residues: Orotidine 5'-phosphate decarboxylase (232 aa).

Residues Asp13, Lys35, 62–71, Thr122, Arg182, Gln191, Gly211, and Arg212 each bind substrate; that span reads DLKFHDIPNT. Lys64 acts as the Proton donor in catalysis.

This sequence belongs to the OMP decarboxylase family. Type 1 subfamily. Homodimer.

It carries out the reaction orotidine 5'-phosphate + H(+) = UMP + CO2. The protein operates within pyrimidine metabolism; UMP biosynthesis via de novo pathway; UMP from orotate: step 2/2. Functionally, catalyzes the decarboxylation of orotidine 5'-monophosphate (OMP) to uridine 5'-monophosphate (UMP). The polypeptide is Orotidine 5'-phosphate decarboxylase (Pseudomonas fluorescens (strain SBW25)).